Here is a 202-residue protein sequence, read N- to C-terminus: MKTVKISAYYAILLALIALICTALSTGIYLLTKSKIEDEINKQRQALLLEVVPQAYFDNPLSENCQRPNSEKLRAQRIDRLCIATKNNQKTAYAFETVAPDGYAGRIRLLVGITPTGTILGVRVLEHQETPGLGDKIETRISDWILSFSQQQLRSDNLADWAVKKDGGKFDQFAGATITPRAVVNQVKQSALSLLDELNQEN.

A helical membrane pass occupies residues 11–31 (AILLALIALICTALSTGIYLL). Residue threonine 177 is modified to FMN phosphoryl threonine.

The protein belongs to the RnfG family. The complex is composed of six subunits: RnfA, RnfB, RnfC, RnfD, RnfE and RnfG. It depends on FMN as a cofactor.

The protein resides in the cell inner membrane. Its function is as follows. Part of a membrane-bound complex that couples electron transfer with translocation of ions across the membrane. The protein is Ion-translocating oxidoreductase complex subunit G of Pasteurella multocida (strain Pm70).